The primary structure comprises 476 residues: MTLLRHLLTATALLGASVQAAQGVTGSPFGFASGTTGGGDATPAAPSDISQLKTWLSDSTPRVILIDKEFNFLGSEGKCTNCECCKPASNTCGSSGQNAVKQNGSDWCGSYPTLTCTYDNAGIEGLEVASNKSIVGVGSSGVLRGKGLRLVNGVSNIIIQNIHITELNPEFIWGGDAITLDGTNNVWIDHVKINLIGRQMFVAGYEASHSVTISNSEFDGETSWSATCDGHHYWTVLGYGHNDKITFANNYIHHTSGRSPKLEFNSFWHAYNNYWYNNTGHAFDVGKNTRALIEGNVMVQVDTPLLADSNPGAVFAVNTSDVSTCTSTLGRTCVPNTLISSGTLSGSDSSVISSWPSGESDVTVMAASKVASYVKANAGIGKLGNGSGSSSTVGAAATSAVAKRADSDDAPFVPAYSEAGPGASAVPTQPSWSWRTVTNGPAPTGAPSDSPSAPQGLGAPVQASNKHHHQGHGRGY.

An N-terminal signal peptide occupies residues 1 to 20 (MTLLRHLLTATALLGASVQA). Cys84 and Cys108 form a disulfide bridge. N-linked (GlcNAc...) asparagine glycosylation is found at Asn103 and Asn131. The active site involves Arg258. Residues Asn277 and Asn318 are each glycosylated (N-linked (GlcNAc...) asparagine). A disulfide bridge connects residues Cys325 and Cys333. Residue Asn385 is glycosylated (N-linked (GlcNAc...) asparagine). Positions 412–476 (FVPAYSEAGP…HHHQGHGRGY (65 aa)) are disordered. Residues 426 to 453 (VPTQPSWSWRTVTNGPAPTGAPSDSPSA) show a composition bias toward polar residues. Residues 465–476 (NKHHHQGHGRGY) show a composition bias toward basic residues.

The protein belongs to the polysaccharide lyase 1 family.

Its subcellular location is the secreted. It catalyses the reaction Eliminative cleavage of (1-&gt;4)-alpha-D-galacturonan methyl ester to give oligosaccharides with 4-deoxy-6-O-methyl-alpha-D-galact-4-enuronosyl groups at their non-reducing ends.. In terms of biological role, pectinolytic enzymes consist of four classes of enzymes: pectin lyase, polygalacturonase, pectin methylesterase and rhamnogalacturonase. Among pectinolytic enzymes, pectin lyase is the most important in depolymerization of pectin, since it cleaves internal glycosidic bonds of highly methylated pectins. The polypeptide is Probable pectin lyase F (pelF) (Aspergillus niger (strain ATCC MYA-4892 / CBS 513.88 / FGSC A1513)).